A 114-amino-acid chain; its full sequence is uncharacterized protein (114 aa).

The 109-residue stretch at 6–114 (IFKNIIQRKI…LGGKKLKSFS (109 aa)) folds into the HIT domain.

This is an uncharacterized protein from Buchnera aphidicola subsp. Acyrthosiphon pisum (strain APS) (Acyrthosiphon pisum symbiotic bacterium).